The following is a 190-amino-acid chain: Molybdenum cofactor guanylyltransferase (190 aa).

Residues 10–12 (LAG), Lys-23, Asn-51, Asp-69, and Asp-99 each bind GTP. Asp-99 is a Mg(2+) binding site.

This sequence belongs to the MobA family. Monomer. Requires Mg(2+) as cofactor.

It localises to the cytoplasm. The enzyme catalyses Mo-molybdopterin + GTP + H(+) = Mo-molybdopterin guanine dinucleotide + diphosphate. Functionally, transfers a GMP moiety from GTP to Mo-molybdopterin (Mo-MPT) cofactor (Moco or molybdenum cofactor) to form Mo-molybdopterin guanine dinucleotide (Mo-MGD) cofactor. This chain is Molybdenum cofactor guanylyltransferase, found in Mannheimia succiniciproducens (strain KCTC 0769BP / MBEL55E).